We begin with the raw amino-acid sequence, 449 residues long: UDP-N-acetylglucosamine 1-carboxyvinyltransferase (449 aa).

The segment covering 1–12 (MQVTVNEHDAVE) has biased composition (basic and acidic residues). Residues 1–30 (MQVTVNEHDAVERVATATPAGNREAHAHGT) are disordered. 51 to 52 (KN) is a binding site for phosphoenolpyruvate. Arg-121 serves as a coordination point for UDP-N-acetyl-alpha-D-glucosamine. The active-site Proton donor is Cys-145. The residue at position 145 (Cys-145) is a 2-(S-cysteinyl)pyruvic acid O-phosphothioketal. Residues 150 to 154 (RPVDQ), Asp-333, and Ile-355 each bind UDP-N-acetyl-alpha-D-glucosamine.

It belongs to the EPSP synthase family. MurA subfamily.

The protein resides in the cytoplasm. The enzyme catalyses phosphoenolpyruvate + UDP-N-acetyl-alpha-D-glucosamine = UDP-N-acetyl-3-O-(1-carboxyvinyl)-alpha-D-glucosamine + phosphate. It functions in the pathway cell wall biogenesis; peptidoglycan biosynthesis. Cell wall formation. Adds enolpyruvyl to UDP-N-acetylglucosamine. This chain is UDP-N-acetylglucosamine 1-carboxyvinyltransferase, found in Burkholderia pseudomallei (strain 1710b).